The chain runs to 154 residues: UPF0756 membrane protein CKR_1028 (154 aa).

4 helical membrane passes run 5 to 25, 48 to 68, 82 to 102, and 113 to 133; these read IILI…VALA, NGLF…IADG, WLGI…GLGM, and IMPA…GVPV.

This sequence belongs to the UPF0756 family.

It is found in the cell membrane. The sequence is that of UPF0756 membrane protein CKR_1028 from Clostridium kluyveri (strain NBRC 12016).